The chain runs to 214 residues: Outer-membrane lipoprotein LolB (214 aa).

Positions 1 to 25 (MNNLKRFTESIFSCIALSTLLFLGG) are cleaved as a signal peptide. Residue C26 is the site of N-palmitoyl cysteine attachment. A lipid anchor (S-diacylglycerol cysteine) is attached at C26.

It belongs to the LolB family. Monomer.

It is found in the cell outer membrane. Functionally, plays a critical role in the incorporation of lipoproteins in the outer membrane after they are released by the LolA protein. The polypeptide is Outer-membrane lipoprotein LolB (Shewanella putrefaciens (strain CN-32 / ATCC BAA-453)).